Here is a 494-residue protein sequence, read N- to C-terminus: Protein DETOXIFICATION 22 (494 aa).

12 helical membrane passes run 40-60 (LWVVAAPSIFTKFSTYGVSLV), 78-98 (ITFTVLLRFSNGILLGMASAL), 123-143 (IVLTGCTICIMPIFIFSGPIL), 159-179 (IALWLIAINFTFVPAFTCQIF), 188-208 (IIAYVSAVTLGLHVFFSWLLV), 217-237 (GAMTSTLVAFWMPNIVQLLYV), 268-288 (GGMVCLELWYNSILVLLTGNL), 299-319 (AICINVNALQMMIALGFLAAV), 340-360 (IVAVFTSLSIGLVLFFVFLFL), 384-404 (LLAFSILLNSVQPVLSGVAVG), 416-436 (LACYYLLGIPVGLVLGYVVGL), and 441-461 (VWIGMLFGIFVQTCVLTIMTL).

Belongs to the multi antimicrobial extrusion (MATE) (TC 2.A.66.1) family.

The protein resides in the membrane. The protein is Protein DETOXIFICATION 22 of Arabidopsis thaliana (Mouse-ear cress).